Reading from the N-terminus, the 140-residue chain is MKEKIPFYNEKEFHDMMKKTKKGTFSGWYIIDKDNKSVEFSGNFNRQFKLNKPVIPVNTEYVTRKEFNEYKDSNDQRLTKIETTLAAQGEQIRIQGEQIKELQIEQKAQGETLKLILQTLQKMSDRLNKMDVRLDKLESK.

Belongs to the UPF0134 family.

In Mycoplasma pneumoniae (strain ATCC 29342 / M129 / Subtype 1) (Mycoplasmoides pneumoniae), this protein is UPF0134 protein MPN_094.